We begin with the raw amino-acid sequence, 308 residues long: D-alanine--D-alanine ligase (308 aa).

One can recognise an ATP-grasp domain in the interval 100–295; that stretch reads KEVFVRNGLP…FDGLIGRLIE (196 aa). Position 127–180 (127–180) interacts with ATP; sequence PFAFPAFIKSNNGGSSLALHRVSCPGELARALDELFTRGGEAIIEPAVEGVEVT. Residues D249, E262, and N264 each coordinate Mg(2+).

It belongs to the D-alanine--D-alanine ligase family. It depends on Mg(2+) as a cofactor. Requires Mn(2+) as cofactor.

Its subcellular location is the cytoplasm. It carries out the reaction 2 D-alanine + ATP = D-alanyl-D-alanine + ADP + phosphate + H(+). Its pathway is cell wall biogenesis; peptidoglycan biosynthesis. Functionally, cell wall formation. This chain is D-alanine--D-alanine ligase, found in Oleidesulfovibrio alaskensis (strain ATCC BAA-1058 / DSM 17464 / G20) (Desulfovibrio alaskensis).